The following is a 100-amino-acid chain: Small ribosomal subunit protein uS14c (100 aa).

This sequence belongs to the universal ribosomal protein uS14 family. Part of the 30S ribosomal subunit.

The protein localises to the plastid. It is found in the chloroplast. Its function is as follows. Binds 16S rRNA, required for the assembly of 30S particles. This chain is Small ribosomal subunit protein uS14c, found in Olimarabidopsis pumila (Dwarf rocket).